A 780-amino-acid polypeptide reads, in one-letter code: Ral guanine nucleotide dissociation stimulator-like 2 (780 aa).

Positions 1–92 are disordered; that stretch reads MLPRPLRLLW…PTPPPRSSRR (92 aa). At Ser-13 the chain carries Phosphoserine. A compositionally biased stretch (gly residues) spans 31–42; it reads GGGPGGRGVGGG. Residues 43 to 65 show a composition bias toward acidic residues; that stretch reads QEEEEEEEEDEAPVSVWDEEEDG. The region spanning 89-213 is the N-terminal Ras-GEF domain; it reads SSRRLRAGTL…GSADLIRNLR (125 aa). Residues 244–516 form the Ras-GEF domain; that stretch reads LADHLAEQLT…HRVSCEVEPP (273 aa). Residues 596 to 613 show a composition bias toward low complexity; that stretch reads HSLADPSHLSPPASSPRP. Disordered regions lie at residues 596-651 and 741-769; these read HSLA…GASD and TATL…PRIK. Residues 651–738 form the Ras-associating domain; sequence DCRIIRVQME…HDFLLRQRRR (88 aa). Residues 741 to 758 are compositionally biased toward low complexity; sequence TATLGLTSSPSASGTPPS.

Interacts with SAMD9.

Its function is as follows. Probable guanine nucleotide exchange factor. Putative effector of Ras and/or Rap. Associates with the GTP-bound form of Rap 1A and H-Ras in vitro. The sequence is that of Ral guanine nucleotide dissociation stimulator-like 2 (RGL2) from Canis lupus familiaris (Dog).